A 411-amino-acid polypeptide reads, in one-letter code: Glutamate dehydrogenase 1, mitochondrial (411 aa).

Residues 1-18 constitute a mitochondrion transit peptide; sequence MNALAATSRNFKQAAKLL. Lys102 is a catalytic residue.

It belongs to the Glu/Leu/Phe/Val dehydrogenases family.

The protein localises to the mitochondrion. It carries out the reaction L-glutamate + NAD(+) + H2O = 2-oxoglutarate + NH4(+) + NADH + H(+). It catalyses the reaction L-glutamate + NADP(+) + H2O = 2-oxoglutarate + NH4(+) + NADPH + H(+). The sequence is that of Glutamate dehydrogenase 1, mitochondrial (GDH1) from Oryza sativa subsp. indica (Rice).